A 196-amino-acid polypeptide reads, in one-letter code: Ribonuclease HII (196 aa).

The region spanning 15–196 is the RNase H type-2 domain; it reads FILAGIDEAG…RLSFTKALYK (182 aa). A divalent metal cation is bound by residues D21, E22, and D112.

Belongs to the RNase HII family. It depends on Mn(2+) as a cofactor. Mg(2+) is required as a cofactor.

It is found in the cytoplasm. The catalysed reaction is Endonucleolytic cleavage to 5'-phosphomonoester.. Its function is as follows. Endonuclease that specifically degrades the RNA of RNA-DNA hybrids. The polypeptide is Ribonuclease HII (Rickettsia bellii (strain OSU 85-389)).